A 280-amino-acid polypeptide reads, in one-letter code: Mastin (280 aa).

Residues 1 to 15 form the signal peptide; it reads MLWLLVLTAPWLGGS. Residues 16-30 constitute a propeptide that is removed on maturation; sequence VPISPDPGLRHEQVG. Residues 31–275 enclose the Peptidase S1 domain; sequence IVGGCKVPAR…YVSWIHQHIP (245 aa). A disulfide bond links cysteine 62 and cysteine 78. Histidine 77 serves as the catalytic Charge relay system. N-linked (GlcNAc...) asparagine glycosylation is found at asparagine 106 and asparagine 117. Aspartate 127 (charge relay system) is an active-site residue. 3 cysteine pairs are disulfide-bonded: cysteine 161-cysteine 234, cysteine 194-cysteine 215, and cysteine 224-cysteine 252. Serine 228 functions as the Charge relay system in the catalytic mechanism.

The protein belongs to the peptidase S1 family. As to quaternary structure, oligomer; disulfide-linked. Post-translationally, N-glycosylated. In terms of tissue distribution, mononuclear cells within skin, intestine, trachea and lung parenchyma, and polymorphonuclear leukocytes within capillaries and blood.

Its subcellular location is the cytoplasm. Inhibited by leupeptin and bis(5-amidino-2-benzimidazolyl)methane (BABIM). Its function is as follows. Trypsin-like serine protease. Has a preference for extended substrates with basic residues at the P1 position; Arg is preferred over Lys. Active towards calcitonin gene-related peptide and gelatin. Not active towards substance P, vasoactive intestinal peptide, type I collagen or azocasein. In Canis lupus familiaris (Dog), this protein is Mastin.